Consider the following 396-residue polypeptide: NAD(P)H oxidoreductase RTN4IP1, mitochondrial (396 aa).

Residues 1-40 (MGFLKTCVFRRNACTAVCFWRSQVVQKPSVRKISTTSPRS) constitute a mitochondrion transit peptide. The region spanning 52–393 (GSNEVLRFTQ…RGHARGKTVI (342 aa)) is the Enoyl reductase (ER) domain. NADPH is bound by residues S214, G216, V217, S237, Y255, N276, L300, A341, F343, H386, A387, and R388.

This sequence belongs to the zinc-containing alcohol dehydrogenase family. Quinone oxidoreductase subfamily. In terms of assembly, interacts with RTN4, UQCRC1 and UQCRC2.

Its subcellular location is the mitochondrion matrix. It is found in the mitochondrion outer membrane. The enzyme catalyses a 3-demethylubiquinone + NADH + 2 H(+) = a 3-demethylubiquinol + NAD(+). It catalyses the reaction a 3-demethylubiquinone + NADPH + 2 H(+) = a 3-demethylubiquinol + NADP(+). It carries out the reaction 3-demethylubiquinone-10 + NADH + 2 H(+) = 3-demethylubiquinol-10 + NAD(+). The catalysed reaction is 3-demethylubiquinone-10 + NADPH + 2 H(+) = 3-demethylubiquinol-10 + NADP(+). It functions in the pathway cofactor biosynthesis; ubiquinone biosynthesis. Its function is as follows. NAD(P)H oxidoreductase involved in the ubiquinone biosynthetic pathway. Required for the O-methyltransferase activity of COQ3. Able to catalyze the oxidoreduction of 3-demethylubiquinone into 3-demethylubiquinol in vitro. However, it is unclear if 3-demethylubiquinone constitutes a substrate in vivo. May also play a role in the regulation of retinal ganglion cell (RGC) neurite outgrowth, and hence in the development of the inner retina and optic nerve. Appears to be a potent inhibitor of regeneration following spinal cord injury. This chain is NAD(P)H oxidoreductase RTN4IP1, mitochondrial (RTN4IP1), found in Bos taurus (Bovine).